Here is a 164-residue protein sequence, read N- to C-terminus: Large ribosomal subunit protein uL10 (164 aa).

The protein belongs to the universal ribosomal protein uL10 family. In terms of assembly, part of the ribosomal stalk of the 50S ribosomal subunit. The N-terminus interacts with L11 and the large rRNA to form the base of the stalk. The C-terminus forms an elongated spine to which L12 dimers bind in a sequential fashion forming a multimeric L10(L12)X complex.

Its function is as follows. Forms part of the ribosomal stalk, playing a central role in the interaction of the ribosome with GTP-bound translation factors. The sequence is that of Large ribosomal subunit protein uL10 from Aliivibrio salmonicida (strain LFI1238) (Vibrio salmonicida (strain LFI1238)).